A 229-amino-acid chain; its full sequence is Extracellular small neutral protease (229 aa).

Residues 1–28 (MRMPLSVLTAAGLSLATLGLGTAGPASA) form the signal peptide. Positions 29–81 (TPTAEGAPVVAYDGSPSAGSPADAKAEAAANRAFFEAVLRSVAEKRAANPKST) are excised as a propeptide. Residues D159 and T161 each contribute to the Ca(2+) site. A Zn(2+)-binding site is contributed by H166. Residue E167 is part of the active site. Zn(2+) is bound by residues H170 and D176. C182 and C195 are disulfide-bonded.

The protein belongs to the peptidase M7 family. As to quaternary structure, monomer. It depends on Ca(2+) as a cofactor. Zn(2+) is required as a cofactor.

The protein resides in the secreted. It catalyses the reaction Hydrolyzes proteins with a preference for Tyr or Phe in the P1' position. Has no action on amino-acid p-nitroanilides.. Functionally, milk hydrolyzing. This chain is Extracellular small neutral protease (snpA), found in Streptomyces sp. (strain C5).